The chain runs to 358 residues: MKFFVLFLCLVQLWGCHSTPVVLGLEERNPACDDPETEAAALAGVDYLNQHVRWGYKHVLNQIDKVRVWPRRPSGEVYELEFDTLETTCHALDITPLANCSVRTVTQHAVEGDCDMHVLKQDGQFSVVFAKCESTPDSREDVRKVCPQCPLLTPVNNTKVVHAANAALAAFNAQNNGSHFELLEISRAQLVPLPVSTYVEFAVVATDCAAADGTDPACSGPPKKQYGFCKATVAEKLGGEEVSVTCTVFPTQPVAPLPQPDAASSANPPPAADPAVSPPSSPSVPVDSVALGPKRVLLPPPVHREHYNLRYSFPDVDSASGEAFGPRQKPKVTHPGVASGVGPVPPPPCPGRIRHFKI.

Positions 1-18 are cleaved as a signal peptide; that stretch reads MKFFVLFLCLVQLWGCHS. The Cystatin fetuin-A-type 1 domain occupies 27-133; it reads ERNPACDDPE…QFSVVFAKCE (107 aa). Cystine bridges form between C32-C349, C89-C100, C114-C132, C146-C149, C208-C218, and C229-C246. The N-linked (GlcNAc...) asparagine glycan is linked to N99. The residue at position 134 (S134) is a Phosphoserine. T135 is modified (phosphothreonine). S138 carries the post-translational modification Phosphoserine. The Cystatin fetuin-A-type 2 domain occupies 144–254; sequence KVCPQCPLLT…TCTVFPTQPV (111 aa). Residues N156 and N176 are each glycosylated (N-linked (GlcNAc...) asparagine). Positions 257–288 are disordered; it reads LPQPDAASSANPPPAADPAVSPPSSPSVPVDS. Pro residues predominate over residues 267 to 282; the sequence is NPPPAADPAVSPPSSP. 2 positions are modified to phosphoserine: S318 and S320. Residues 320–350 form a disordered region; the sequence is SGEAFGPRQKPKVTHPGVASGVGPVPPPPCP.

Belongs to the fetuin family. Phosphorylated by FAM20C in the extracellular medium. In terms of tissue distribution, bone marrow.

It localises to the secreted. This Cavia porcellus (Guinea pig) protein is Alpha-2-HS-glycoprotein (AHSG).